Consider the following 425-residue polypeptide: Enolase (425 aa).

Q163 provides a ligand contact to (2R)-2-phosphoglycerate. E205 (proton donor) is an active-site residue. Residues D242, E285, and D312 each contribute to the Mg(2+) site. Residues K337, R366, S367, and K388 each coordinate (2R)-2-phosphoglycerate. The Proton acceptor role is filled by K337.

This sequence belongs to the enolase family. The cofactor is Mg(2+).

Its subcellular location is the cytoplasm. The protein localises to the secreted. It is found in the cell surface. It catalyses the reaction (2R)-2-phosphoglycerate = phosphoenolpyruvate + H2O. It participates in carbohydrate degradation; glycolysis; pyruvate from D-glyceraldehyde 3-phosphate: step 4/5. Its function is as follows. Catalyzes the reversible conversion of 2-phosphoglycerate (2-PG) into phosphoenolpyruvate (PEP). It is essential for the degradation of carbohydrates via glycolysis. This Ruegeria pomeroyi (strain ATCC 700808 / DSM 15171 / DSS-3) (Silicibacter pomeroyi) protein is Enolase.